Consider the following 213-residue polypeptide: tRNA (guanine-N(7)-)-methyltransferase (213 aa).

S-adenosyl-L-methionine-binding residues include E44, E69, N96, and D118. The active site involves D118. Residue K122 coordinates substrate. An interaction with RNA region spans residues 124 to 129 (RHEKRR). Substrate is bound by residues D154 and 191-194 (TEYE).

The protein belongs to the class I-like SAM-binding methyltransferase superfamily. TrmB family.

The enzyme catalyses guanosine(46) in tRNA + S-adenosyl-L-methionine = N(7)-methylguanosine(46) in tRNA + S-adenosyl-L-homocysteine. The protein operates within tRNA modification; N(7)-methylguanine-tRNA biosynthesis. Its function is as follows. Catalyzes the formation of N(7)-methylguanine at position 46 (m7G46) in tRNA. This Oceanobacillus iheyensis (strain DSM 14371 / CIP 107618 / JCM 11309 / KCTC 3954 / HTE831) protein is tRNA (guanine-N(7)-)-methyltransferase.